The chain runs to 228 residues: Flagellar L-ring protein (228 aa).

Residues 1–17 (MHYLRYFAIAFLLLLSS) form the signal peptide. Cys18 carries the N-palmitoyl cysteine lipid modification. A lipid anchor (S-diacylglycerol cysteine) is attached at Cys18.

This sequence belongs to the FlgH family. As to quaternary structure, the basal body constitutes a major portion of the flagellar organelle and consists of four rings (L,P,S, and M) mounted on a central rod.

Its subcellular location is the cell membrane. The protein resides in the bacterial flagellum basal body. Assembles around the rod to form the L-ring and probably protects the motor/basal body from shearing forces during rotation. This chain is Flagellar L-ring protein, found in Wigglesworthia glossinidia brevipalpis.